A 109-amino-acid chain; its full sequence is Iron-sulfur cluster assembly protein CyaY (109 aa).

It belongs to the frataxin family.

In terms of biological role, involved in iron-sulfur (Fe-S) cluster assembly. May act as a regulator of Fe-S biogenesis. The sequence is that of Iron-sulfur cluster assembly protein CyaY from Verminephrobacter eiseniae (strain EF01-2).